The sequence spans 149 residues: Deoxyuridine 5'-triphosphate nucleotidohydrolase (149 aa).

Substrate contacts are provided by residues 68-70 (RSG), Asn-81, 85-87 (LID), and Met-95.

It belongs to the dUTPase family. It depends on Mg(2+) as a cofactor.

The enzyme catalyses dUTP + H2O = dUMP + diphosphate + H(+). The protein operates within pyrimidine metabolism; dUMP biosynthesis; dUMP from dCTP (dUTP route): step 2/2. This enzyme is involved in nucleotide metabolism: it produces dUMP, the immediate precursor of thymidine nucleotides and it decreases the intracellular concentration of dUTP so that uracil cannot be incorporated into DNA. The sequence is that of Deoxyuridine 5'-triphosphate nucleotidohydrolase from Herminiimonas arsenicoxydans.